Here is a 118-residue protein sequence, read N- to C-terminus: Large ribosomal subunit protein uL18 (118 aa).

It belongs to the universal ribosomal protein uL18 family. Part of the 50S ribosomal subunit; part of the 5S rRNA/L5/L18/L25 subcomplex. Contacts the 5S and 23S rRNAs.

This is one of the proteins that bind and probably mediate the attachment of the 5S RNA into the large ribosomal subunit, where it forms part of the central protuberance. The sequence is that of Large ribosomal subunit protein uL18 from Rickettsia canadensis (strain McKiel).